Consider the following 222-residue polypeptide: Sororin-like protein (222 aa).

Residues 1 to 189 (MEAPRSVGGR…VKQEKEDPVS (189 aa)) form a disordered region. The span at 24-33 (SRSSQQSSSS) shows a compositional bias: low complexity. Positions 47 to 60 (RLVEQTTLKEKPKD) are enriched in basic and acidic residues. The span at 88-105 (ADLASPASAPSRPQTSRS) shows a compositional bias: low complexity. Residues 155 to 162 (GKKTRQAS) carry the Nuclear localization signal motif. Residues 167–179 (KTLKVAPKKRQRT) show a composition bias toward basic residues. Positions 192-214 (CQDYIEKQKAYFAEIDAFELPVE) are C-terminal Sororin domain.

This sequence belongs to the sororin family.

It is found in the nucleus. Regulator of sister chromatid cohesion in mitosis stabilizing cohesin complex association with chromatin. Antagonizes the action of WAPL proteins (WAPL1 and WAPL2) which stimulates cohesin dissociation from chromatin, particularly during somatic division in root cells and meiocytes during anaphase I. Required for centromeric sister chromatid cohesion during male meiosis (microsporogenesis). Cohesion ensures that chromosome partitioning is accurate in dividing cells and may play an important role in DNA repair. The polypeptide is Sororin-like protein (Arabidopsis thaliana (Mouse-ear cress)).